The primary structure comprises 353 residues: MAHNQDASSPSGMTYRDAGVDIDAGNRLVSMIKRSVASTHRPEVRSDLGGFGALFDLDTRKYQDPVLVSATDGVGTKLKLAFLTGKHDTVGIDLVAMSVNDLVVQGAEPLFFLDYFACGKLSPETAATVVEGIATGCRAAGCALIGGETAEMPGFYTEGEYDLAGFAVGAVDKHKIIDGRHISPGDAIIGLASSGPHSNGYSLIRKLVLGQSGPGLEADFNGKPLGEVLLTPTHIYVLPLLELAKTHAIHGLVHITGGGFWENIPRILPDATGALLKRSCWQQPEVFNLLQKLGNIAEDEMLRTFNCGLGMLVIVPATQADSALAQLRAAGEQAELVGEITSCKEGDARVVIL.

Belongs to the AIR synthase family.

The protein localises to the cytoplasm. It carries out the reaction 2-formamido-N(1)-(5-O-phospho-beta-D-ribosyl)acetamidine + ATP = 5-amino-1-(5-phospho-beta-D-ribosyl)imidazole + ADP + phosphate + H(+). Its pathway is purine metabolism; IMP biosynthesis via de novo pathway; 5-amino-1-(5-phospho-D-ribosyl)imidazole from N(2)-formyl-N(1)-(5-phospho-D-ribosyl)glycinamide: step 2/2. This is Phosphoribosylformylglycinamidine cyclo-ligase from Magnetococcus marinus (strain ATCC BAA-1437 / JCM 17883 / MC-1).